The primary structure comprises 121 residues: Ribosome-binding factor A (121 aa).

The protein belongs to the RbfA family. Monomer. Binds 30S ribosomal subunits, but not 50S ribosomal subunits or 70S ribosomes.

Its subcellular location is the cytoplasm. Its function is as follows. One of several proteins that assist in the late maturation steps of the functional core of the 30S ribosomal subunit. Associates with free 30S ribosomal subunits (but not with 30S subunits that are part of 70S ribosomes or polysomes). Required for efficient processing of 16S rRNA. May interact with the 5'-terminal helix region of 16S rRNA. The protein is Ribosome-binding factor A of Lactobacillus helveticus (strain DPC 4571).